We begin with the raw amino-acid sequence, 773 residues long: Jhy protein homolog (773 aa).

Disordered stretches follow at residues 1 to 247 (MSHS…SKQY), 325 to 373 (WSQY…KSLV), 496 to 526 (KKHP…QPKL), 596 to 615 (ESES…KISR), and 713 to 743 (AKTI…KEDT). Polar residues predominate over residues 10–28 (VSIQSPVHHTNIKVQSTEP). Basic and acidic residues predominate over residues 29–43 (SFKKEDLHLISKDSL). A compositionally biased stretch (polar residues) spans 48-57 (ESPTQKIKSQ). The segment covering 59–84 (DLEDQIQDNDMEPDSLEEENLSETEE) has biased composition (acidic residues). Positions 112–134 (PTEDKYSHIRYDPNWKSKKEEGK) are enriched in basic and acidic residues. The segment covering 145 to 154 (VDSSTENLTL) has biased composition (polar residues). Low complexity predominate over residues 216 to 229 (SNLSRYLKSSSSRS). Polar residues predominate over residues 334 to 351 (SSGPRGQSSETTNGQQPS). Basic residues predominate over residues 353–369 (KPAKHKIRKQRRHRHGP). Residues 500 to 516 (SGSQKGSQSVSNINRQA) are compositionally biased toward polar residues. Over residues 598 to 610 (ESQLSSERSQRNQ) the composition is skewed to low complexity. Positions 728-743 (ASKEKKTPTHAGKEDT) are enriched in basic and acidic residues.

Functionally, required for the normal development of cilia in brain ependymal cells lining the ventricular surfaces. This is Jhy protein homolog (JHY) from Bos taurus (Bovine).